The following is a 369-amino-acid chain: Putative gustatory receptor 39b (369 aa).

Over 1 to 32 (MLYSFHPYLKYFALLGLVPWSESCAQSKFVQK) the chain is Cytoplasmic. Residues 33 to 53 (VYSAILIILNAVHFGISIYFP) traverse the membrane as a helical segment. At 54-59 (QSAELF) the chain is on the extracellular side. Residues 60–80 (LSLMVNVIVFVARIVCVTVII) traverse the membrane as a helical segment. Residues 81-122 (LQVMVHYDDYFRFCREMKYLGLRLQCELKIHVGRLKWQSYAK) are Cytoplasmic-facing. The helical transmembrane segment at 123–143 (ILALGIGFLVTVLPSIYVALS) threads the bilayer. Topologically, residues 144–147 (GSLL) are extracellular. A helical transmembrane segment spans residues 148–168 (YFWSSLLSILIIRMQFVLVLL). Over 169 to 224 (NVELLGHHVSLLGIRLQNVLECHLMGANCTLDGNANRLCSLEFLLALKQSHMQLHY) the chain is Cytoplasmic. Residues 225–245 (LFTHFNDLFGWSILGTYVVLF) form a helical membrane-spanning segment. Residues 246-265 (SDSTVNIYWTQQVLVEVYEY) are Extracellular-facing. Residues 266–286 (KYLYATFSVFVPSFFNILVFC) traverse the membrane as a helical segment. The Cytoplasmic portion of the chain corresponds to 287 to 348 (RCGEFCQRQS…EGFMSTDNSL (62 aa)). Residues 349–368 (LMSILAAKVTYLIVLMQFSS) traverse the membrane as a helical segment. Position 369 (valine 369) is a topological domain, extracellular.

Belongs to the insect chemoreceptor superfamily. Gustatory receptor (GR) family. Gr2a subfamily. In terms of tissue distribution, expressed in the adult labellar chemosensory neurons and in abdominal ganglions. In larvae, is expressed in neurons of the dorsal and posterior pharyngeal sense organs.

Its subcellular location is the cell membrane. Its function is as follows. Probable gustatory receptor which mediates acceptance or avoidance behavior, depending on its substrates. Has also atypical sensory function in organ not limited to conventional taste sensing like abdominal ganglions. In Drosophila melanogaster (Fruit fly), this protein is Putative gustatory receptor 39b (Gr39b).